The sequence spans 202 residues: Large ribosomal subunit protein bL25 (202 aa).

It belongs to the bacterial ribosomal protein bL25 family. CTC subfamily. As to quaternary structure, part of the 50S ribosomal subunit; part of the 5S rRNA/L5/L18/L25 subcomplex. Contacts the 5S rRNA. Binds to the 5S rRNA independently of L5 and L18.

Functionally, this is one of the proteins that binds to the 5S RNA in the ribosome where it forms part of the central protuberance. The chain is Large ribosomal subunit protein bL25 from Clostridium perfringens (strain ATCC 13124 / DSM 756 / JCM 1290 / NCIMB 6125 / NCTC 8237 / Type A).